The sequence spans 157 residues: Transcriptional repressor NrdR (157 aa).

A disordered region spans residues 1–21 (MKCPHCGNNGSRVVDSRPTDE). A zinc finger spans residues 3–34 (CPHCGNNGSRVVDSRPTDEGRVIRRRRECEKC). The region spanning 49–139 (LLVIKKNGSR…VYRQFKDMHV (91 aa)) is the ATP-cone domain.

It belongs to the NrdR family. It depends on Zn(2+) as a cofactor.

In terms of biological role, negatively regulates transcription of bacterial ribonucleotide reductase nrd genes and operons by binding to NrdR-boxes. The protein is Transcriptional repressor NrdR of Pediococcus pentosaceus (strain ATCC 25745 / CCUG 21536 / LMG 10740 / 183-1w).